The following is a 2617-amino-acid chain: MKILFFMIQIKNRNKLNNKNDFIINQIEKKNTQIIITKTLKKNFKNVKLNYYWNQTFDKNRLKNFIFWCLKNYGQNKTIKVLEILKYLGFKYATKAGLSLSIDDLIIPPTKSKLLIEAELTTRTAMLQYKNAQITNLERFQQIIETWHITSEKMKDDMIYHFKTTNIFNPLYMMAFSGARGNVSQVRQLVGMRGLMANPQGQILDFPIQSNFREGLTLTEYVISCYGARKGVVDTALRTANAGYLTRRLVDVAQHVIISNFDCGTHRGIIISEMKQGNKLLFSLRQRLLGRVLAKDVKSGDLLIAKKNQEISDHLSEIIASIVKTVIIRSPLTCKTTQFICQLCYGWSLAEGRLVGVGETVGIIAAQSIGEPGTQLTMRTFHTGGVFAGELLDQLIAPFDGIIKYNIYIPGNMIRTPQGKIAFLTRIDSQLIIQSCSNLNNQKYYTIPPYTILFIRNMETVSKNQLIAQLCSFSPSLKNSSDLIEYKIYSDLEGEIKSTNFKILKKVTEMRDIMYQSLEWGYIWILSGKIYQLPFHSIDNLKLQYTFQQKNNFFPIKGDFLTNSSILSQILWINNLENVRLNFKQKHIFYQKFIKNSYNYTCINNSNQIQMKWLKKWQKLSEISTFLNLNKSIKTFKSNFNMDLSKENRLINIYSQNLLLFLTIDKIRYKKFGYFIFFQNNLKNRSLRNIKNSIKQNKEIVVNFNYLKKNSLKHFIFDHKFFIPISLESTDFVNKENSLITSPRFFYQKLSNRFFEWFFNQENQIGSGLIQLSEIFVFKKNLQKEISKKNQIRKKQEKNVKLKYHSLTLKKKKGLSNQFYTYNCMNSYSSETRYFPHTSCFLNHFNNEKINKYLNTNYSLIFFYFRPFIQCEKQQLSQFHYINNKKYFDNLSLLLKPTIIASKKKQIRVNMKNTYEYLNQKIYDLKKQLIKNKLFQKIGKYESNKFFRLISNHIKKYQIIKKTNTHTIERVNVTKFKLVYNSGIDNFNKRNYFINHKKKRYLKTYISFHPLNFFNKIFNHGNFLLKKKFYYKLQLIMLCKNNNDKFNSMCQVRCNSFFTTLSTNFLTKKIFFDFNFDKTHKKDFFLKKNDFISFSFFNKFSNIFISFSKSPTNYIDDTHNFMNSYKYISNEFFYLNWSNIVNKHKIFKEYVFKNNFNKSKEMQNIKNLKKLHSSFTYYIIKNQFRFAPSFQKQSINELENIYKKEINQVSDTYNCIIKHRLLCINQLNNNFLSYLTYVKLYEFNIYKKSPINTLIKLNLDTYNCMNDKFNIQKFINQIENKKNGLDNQKKCNKNMKKIFYLQILLNQLRKFYNYLFNKKTQKLLFKNNNYKQKNIEKDILNNNTILNSIYYKKCVPILLIKYKKIQITMNTRSLHTIYIFNNFLIRKPSRKKNSIFVNKKISLINNQKTHSLLKMYLIKMHSLNNLVINAYFQSVSFKWLKKQTDRSLRKKRIFNQIFLKRLEFAKFINKNLIISHEKMQPTVLDFSDKLNSSQQTENKKIKTLNKKRLYKNNISKIANEILFLYSRFLLIPKEYSTISKKQLSFLFFHPQQHLHCINPFYKILETRTLYELWNSNNLSFFHKSVFFTKKKFISNRKLKLKRTLKLLTLKNYLNFKKIDSYNCMCIVSTNNYLQKINTFIFNLFHNLFHTYFQLFKNNRQGNYIPLKYNNYYGIFQLNKKNPKRDFSKFKYIQQKYYPDKNLFYLSEKSSIFLNKNWQLYKNKKEFLLTSQPGWICKPIKKTHTINVDSDFLSNYSLHSITQLLKKNLKLYNQNYINYFKSIPVSYRFCERNLIWFNFTFLKMIELVKKFFKDTYNCMNPLLFLPFFHSFSNFIRYNENFKNIKTSNSKKIKKNGWLINKKSRFLKMKKSNMFFCLKKTTNKIDNIFLFVEGQEFIINNYQNLSYISDTNLLCLSKKKLFKMSEKQYKSKSLRNNNGLIWKSQYNSIFLNKQKISQKLIFKFPNLETTFEQYLGIPFNKISKTFNKENNIKISYDINRKMRTYTYNYINYRNFPSNHIQQYSEINQILTKSNSFNLINKNYKIFKSQKSLNTFRHFLGFSIPITFDFSFQSSHIFWNYYPNYNLSNLKLDKRKKSMEFFNYLILKNKLLNLNIIKVKKSRHVLLYEDSINFINIFNSIEMLLRQPCINWSTTKKINLGYQKNIFLAPTKTFLLLSLENSSVTNNPIALTEIFSNMEGEILYSLKNKKNHPPFHYPLKSGDKNKFEFNEFLQKYDRSIFLTKSDQICLKFKNEIYLNNELAFLKKFNVFKNQKHIRGLKTFQIKSSKQIFLIFKILQKIHNNCQFSNQSIKIKLGLFLFQGDLLNTFFRNSNINNNTFNCVSIIKNKKTTKIQKNYKRSIVCVVNHSGQIIHLNQHKLTLRKGQPIFFSPHCIFHSYNSDFIEQNKPVLSLPYQQLKTGDIVQGIPKIEQLFEARLTFAGKLEYDNLTNILEIIFQTYKNKLTLKLAVRRSIELVQMIIVNSIQRIYRSQGVNISDKHLEVIVKQMTKKVEIIDSGQSGFLIGEHFDLDVVELWNSKLSKIKHVKYKPLILGISKASLQTDSFLSAASFQYTTRILSQSAFFKKRDFLKGLKENIIVGNIIPAGTGYLGHIEDLFETS.

Zn(2+) contacts are provided by Cys-263, Cys-334, Cys-341, and Cys-344.

This sequence belongs to the RNA polymerase beta' chain family. RpoC2 subfamily. As to quaternary structure, in plastids the minimal PEP RNA polymerase catalytic core is composed of four subunits: alpha, beta, beta', and beta''. When a (nuclear-encoded) sigma factor is associated with the core the holoenzyme is formed, which can initiate transcription. Zn(2+) is required as a cofactor.

It is found in the plastid. It localises to the chloroplast. The catalysed reaction is RNA(n) + a ribonucleoside 5'-triphosphate = RNA(n+1) + diphosphate. DNA-dependent RNA polymerase catalyzes the transcription of DNA into RNA using the four ribonucleoside triphosphates as substrates. This is DNA-directed RNA polymerase subunit beta'' from Oedogonium cardiacum (Filamentous green alga).